A 211-amino-acid polypeptide reads, in one-letter code: ATP-dependent Clp protease proteolytic subunit (211 aa).

Catalysis depends on serine 107, which acts as the Nucleophile. Histidine 132 is an active-site residue.

This sequence belongs to the peptidase S14 family. Fourteen ClpP subunits assemble into 2 heptameric rings which stack back to back to give a disk-like structure with a central cavity, resembling the structure of eukaryotic proteasomes.

It is found in the cytoplasm. The catalysed reaction is Hydrolysis of proteins to small peptides in the presence of ATP and magnesium. alpha-casein is the usual test substrate. In the absence of ATP, only oligopeptides shorter than five residues are hydrolyzed (such as succinyl-Leu-Tyr-|-NHMec, and Leu-Tyr-Leu-|-Tyr-Trp, in which cleavage of the -Tyr-|-Leu- and -Tyr-|-Trp bonds also occurs).. Cleaves peptides in various proteins in a process that requires ATP hydrolysis. Has a chymotrypsin-like activity. Plays a major role in the degradation of misfolded proteins. The polypeptide is ATP-dependent Clp protease proteolytic subunit (Xanthobacter autotrophicus (strain ATCC BAA-1158 / Py2)).